The following is a 361-amino-acid chain: 3-dehydroquinate synthase (361 aa).

This sequence belongs to the archaeal-type DHQ synthase family.

The catalysed reaction is 2-amino-2,3,7-trideoxy-D-lyxo-hept-6-ulosonate + NAD(+) + H2O = 3-dehydroquinate + NH4(+) + NADH + H(+). Catalyzes the oxidative deamination and cyclization of 2-amino-3,7-dideoxy-D-threo-hept-6-ulosonic acid (ADH) to yield 3-dehydroquinate (DHQ), which is fed into the canonical shikimic pathway of aromatic amino acid biosynthesis. This is 3-dehydroquinate synthase from Methanococcus maripaludis (strain C5 / ATCC BAA-1333).